A 289-amino-acid polypeptide reads, in one-letter code: 4-diphosphocytidyl-2-C-methyl-D-erythritol kinase (289 aa).

Lysine 10 is a catalytic residue. An ATP-binding site is contributed by 94 to 104; that stretch reads PVAAGLAGGSS. The active site involves aspartate 136.

The protein belongs to the GHMP kinase family. IspE subfamily.

It catalyses the reaction 4-CDP-2-C-methyl-D-erythritol + ATP = 4-CDP-2-C-methyl-D-erythritol 2-phosphate + ADP + H(+). It functions in the pathway isoprenoid biosynthesis; isopentenyl diphosphate biosynthesis via DXP pathway; isopentenyl diphosphate from 1-deoxy-D-xylulose 5-phosphate: step 3/6. Catalyzes the phosphorylation of the position 2 hydroxy group of 4-diphosphocytidyl-2C-methyl-D-erythritol. In Bacillus cereus (strain G9842), this protein is 4-diphosphocytidyl-2-C-methyl-D-erythritol kinase.